Here is a 152-residue protein sequence, read N- to C-terminus: Ubiquitin-conjugating enzyme E2 N (152 aa).

The UBC core domain occupies 3–149 (GLPRRIIKET…ARAWTRLYAM (147 aa)). K82 carries the N6-acetyllysine modification. Catalysis depends on C87, which acts as the Glycyl thioester intermediate. K92 is covalently cross-linked (Glycyl lysine isopeptide (Lys-Gly) (interchain with G-Cter in ISG15)).

Belongs to the ubiquitin-conjugating enzyme family. Heterodimer with UBE2V2. Interacts (UBE2V2-UBE2N heterodimer) with the E3 ligase STUB1 (via the U-box domain); the complex has a specific 'Lys-63'-linked polyubiquitination activity. Interacts with RNF8 and RNF168. Interacts with RNF11. Interacts with the E3 ligases, HLTF and SHPRH; the interactions promote the 'Lys-63'-linked polyubiquitination of PCNA upon genotoxic stress and lead to DNA repair. Interacts with ARIH2 (via RING-type 2). Interacts with OTUB1; leading to inhibit E2-conjugating activity. Interacts with RIGI and RNF135; involved in RIGI ubiquitination and activation. Conjugation to ISG15 impairs formation of the thioester bond with ubiquitin but not interaction with UBE2V2.

It carries out the reaction S-ubiquitinyl-[E1 ubiquitin-activating enzyme]-L-cysteine + [E2 ubiquitin-conjugating enzyme]-L-cysteine = [E1 ubiquitin-activating enzyme]-L-cysteine + S-ubiquitinyl-[E2 ubiquitin-conjugating enzyme]-L-cysteine.. The protein operates within protein modification; protein ubiquitination. Activity is inhibited by binding to OTUB1, which prevents 'Lys-63'-linked polyubiquitination. Functionally, the UBE2V1-UBE2N and UBE2V2-UBE2N heterodimers catalyze the synthesis of non-canonical 'Lys-63'-linked polyubiquitin chains. This type of polyubiquitination does not lead to protein degradation by the proteasome. Mediates transcriptional activation of target genes. Plays a role in the control of progress through the cell cycle and differentiation. Plays a role in the error-free DNA repair pathway and contributes to the survival of cells after DNA damage. Acts together with the E3 ligases, HLTF and SHPRH, in the 'Lys-63'-linked poly-ubiquitination of PCNA upon genotoxic stress, which is required for DNA repair. Appears to act together with E3 ligase RNF5 in the 'Lys-63'-linked polyubiquitination of JKAMP thereby regulating JKAMP function by decreasing its association with components of the proteasome and ERAD. Promotes TRIM5 capsid-specific restriction activity and the UBE2V1-UBE2N heterodimer acts in concert with TRIM5 to generate 'Lys-63'-linked polyubiquitin chains which activate the MAP3K7/TAK1 complex which in turn results in the induction and expression of NF-kappa-B and MAPK-responsive inflammatory genes. Together with RNF135 and UB2V1, catalyzes the viral RNA-dependent 'Lys-63'-linked polyubiquitination of RIGI to activate the downstream signaling pathway that leads to interferon beta production. UBE2V1-UBE2N together with TRAF3IP2 E3 ubiquitin ligase mediate 'Lys-63'-linked polyubiquitination of TRAF6, a component of IL17A-mediated signaling pathway. This Macaca fascicularis (Crab-eating macaque) protein is Ubiquitin-conjugating enzyme E2 N (UBE2N).